A 636-amino-acid polypeptide reads, in one-letter code: Threonine--tRNA ligase (636 aa).

One can recognise a TGS domain in the interval 1 to 61; the sequence is MINITLPDGK…ETDASVVFIT (61 aa). Positions 238 to 528 are catalytic; that stretch reads DHRKLGTALD…LIEHYAGKFP (291 aa). Zn(2+) is bound by residues cysteine 329, histidine 380, and histidine 505.

The protein belongs to the class-II aminoacyl-tRNA synthetase family. Homodimer. Zn(2+) is required as a cofactor.

The protein resides in the cytoplasm. It carries out the reaction tRNA(Thr) + L-threonine + ATP = L-threonyl-tRNA(Thr) + AMP + diphosphate + H(+). Functionally, catalyzes the attachment of threonine to tRNA(Thr) in a two-step reaction: L-threonine is first activated by ATP to form Thr-AMP and then transferred to the acceptor end of tRNA(Thr). Also edits incorrectly charged L-seryl-tRNA(Thr). The sequence is that of Threonine--tRNA ligase from Desulfatibacillum aliphaticivorans.